The primary structure comprises 234 residues: MAQRALVLHRWDYQETSLILDLFTEDKGRVRVVAKGAKRPKSPWRGLAQPFMPLLAEFQGRSDLKTLTLLEPQQTTQKLLLQGDKLYSGFYLNELIQRLVPTEAEAPELFESYLSALQNMTNSERVEPALRQFEWQLLQHLGAAFDWHYDADTGNVLSDSKWCYFIPDHGFVTQARDNQQRAYSVADIQKLAAWDVDDENRLRLLKYIMRDALAVYLGDKPLRSRELFRGTKRQ.

Belongs to the RecO family.

Its function is as follows. Involved in DNA repair and RecF pathway recombination. This Idiomarina loihiensis (strain ATCC BAA-735 / DSM 15497 / L2-TR) protein is DNA repair protein RecO.